The chain runs to 116 residues: Large ribosomal subunit protein uL24 (116 aa).

Belongs to the universal ribosomal protein uL24 family. In terms of assembly, part of the 50S ribosomal subunit.

Functionally, one of two assembly initiator proteins, it binds directly to the 5'-end of the 23S rRNA, where it nucleates assembly of the 50S subunit. In terms of biological role, one of the proteins that surrounds the polypeptide exit tunnel on the outside of the subunit. The chain is Large ribosomal subunit protein uL24 from Protochlamydia amoebophila (strain UWE25).